A 131-amino-acid chain; its full sequence is Small ribosomal subunit protein uS11 (131 aa).

It belongs to the universal ribosomal protein uS11 family. As to quaternary structure, part of the 30S ribosomal subunit. Interacts with proteins S7 and S18. Binds to IF-3. Interacts with VmlR. Interacts with BrxC.

Its function is as follows. Located on the platform of the 30S subunit, it bridges several disparate RNA helices of the 16S rRNA. Forms part of the Shine-Dalgarno cleft in the 70S ribosome. The polypeptide is Small ribosomal subunit protein uS11 (Bacillus subtilis (strain 168)).